The sequence spans 341 residues: GTP-binding protein REM 2 (341 aa).

The span at Met1–Thr13 shows a compositional bias: acidic residues. Disordered stretches follow at residues Met1–Val72 and Val84–Glu106. A compositionally biased stretch (polar residues) spans Leu18–Pro32. Ser27 bears the Phosphoserine mark. A compositionally biased stretch (basic and acidic residues) spans Gln43–Arg54. Residues Ser94–Gly105 are compositionally biased toward low complexity. Residues Gly122–Ser129, Asn230–Asp233, and Ala261–Ala262 contribute to the GTP site. A disordered region spans residues Arg282 to Leu309. The span at Pro294–Pro303 shows a compositional bias: pro residues. Phosphoserine is present on Ser296.

Belongs to the small GTPase superfamily. RGK family. In terms of tissue distribution, expressed in brain and kidney.

It localises to the cell membrane. Functionally, binds GTP saturably and exhibits a low intrinsic rate of GTP hydrolysis. This chain is GTP-binding protein REM 2 (Rem2), found in Rattus norvegicus (Rat).